Consider the following 327-residue polypeptide: GMP reductase (327 aa).

The active-site Thioimidate intermediate is cysteine 176. NADP(+) is bound at residue isoleucine 205–valine 228.

This sequence belongs to the IMPDH/GMPR family. GuaC type 2 subfamily.

It catalyses the reaction IMP + NH4(+) + NADP(+) = GMP + NADPH + 2 H(+). Functionally, catalyzes the irreversible NADPH-dependent deamination of GMP to IMP. It functions in the conversion of nucleobase, nucleoside and nucleotide derivatives of G to A nucleotides, and in maintaining the intracellular balance of A and G nucleotides. This Helicobacter pylori (strain ATCC 700392 / 26695) (Campylobacter pylori) protein is GMP reductase.